A 346-amino-acid polypeptide reads, in one-letter code: MMNRGISVDDCLPKFFKVYLPDDSGDDLELPISFNSFLPKSLPKNVIVRSIYGNIWKVAFRKFCGDSERFVMVNGWKKIVKDEDLKGGEFLEFEFDGSWCFNFCIYGRATCKRLRSSVQITVLDDNDDGFNDDQDYGEEVKSSENFIVLDDDDISDVQDYNEEDTSSEDITALDDADNDDINDVQDYVEEDTSSEDIIVIDDDDDDDDQDYGDDDHADVEKERWRGVKTEKKKKGSSGEHDRQYLDNHMNPFFTVNQHRQIKYNMLRIPTKVITKYGLHFPEFINLIDPLEKNFGKLKRKVKGQTIKGFRSIIRRNNVKLNDKVICELEKEMDGLVREIKVHVIRG.

A DNA-binding region (TF-B3) is located at residues 13-109 (PKFFKVYLPD…CFNFCIYGRA (97 aa)). 2 disordered regions span residues 158–179 (QDYNEEDTSSEDITALDDADND) and 192–243 (TSSE…HDRQ). Over residues 192 to 217 (TSSEDIIVIDDDDDDDDQDYGDDDHA) the composition is skewed to acidic residues. Basic and acidic residues predominate over residues 218 to 229 (DVEKERWRGVKT).

Its subcellular location is the nucleus. This chain is B3 domain-containing protein At5g60142, found in Arabidopsis thaliana (Mouse-ear cress).